We begin with the raw amino-acid sequence, 508 residues long: Light-independent protochlorophyllide reductase subunit B (508 aa).

Asp-36 contributes to the [4Fe-4S] cluster binding site. Asp-294 functions as the Proton donor in the catalytic mechanism. Gly-429–Met-430 is a substrate binding site.

The protein belongs to the ChlB/BchB/BchZ family. As to quaternary structure, protochlorophyllide reductase is composed of three subunits; ChlL, ChlN and ChlB. Forms a heterotetramer of two ChlB and two ChlN subunits. Requires [4Fe-4S] cluster as cofactor.

The enzyme catalyses chlorophyllide a + oxidized 2[4Fe-4S]-[ferredoxin] + 2 ADP + 2 phosphate = protochlorophyllide a + reduced 2[4Fe-4S]-[ferredoxin] + 2 ATP + 2 H2O. It participates in porphyrin-containing compound metabolism; chlorophyll biosynthesis (light-independent). In terms of biological role, component of the dark-operative protochlorophyllide reductase (DPOR) that uses Mg-ATP and reduced ferredoxin to reduce ring D of protochlorophyllide (Pchlide) to form chlorophyllide a (Chlide). This reaction is light-independent. The NB-protein (ChlN-ChlB) is the catalytic component of the complex. The polypeptide is Light-independent protochlorophyllide reductase subunit B (Acaryochloris marina (strain MBIC 11017)).